A 364-amino-acid chain; its full sequence is D-alanine--D-alanine ligase (364 aa).

The ATP-grasp domain occupies 141–346; sequence KNLFAQAGLR…YSELIERLIA (206 aa). Position 174–229 (174–229) interacts with ATP; that stretch reads EQELGYPCFVKPANAGSSVGISKCKQRDDLKTAFAEAFKYDRKIIIEESIVGREIE. Mg(2+)-binding residues include Asp-300, Glu-313, and Asn-315.

It belongs to the D-alanine--D-alanine ligase family. Mg(2+) serves as cofactor. Mn(2+) is required as a cofactor.

It localises to the cytoplasm. It carries out the reaction 2 D-alanine + ATP = D-alanyl-D-alanine + ADP + phosphate + H(+). It participates in cell wall biogenesis; peptidoglycan biosynthesis. Functionally, cell wall formation. This Geobacillus thermodenitrificans (strain NG80-2) protein is D-alanine--D-alanine ligase.